The primary structure comprises 647 residues: Chaperone protein DnaK (647 aa).

Thr198 is modified (phosphothreonine; by autocatalysis). Residues 606–634 (GASAEGMDPNQFQQGADNAGESNQADDDV) are disordered. Over residues 615–628 (NQFQQGADNAGESN) the composition is skewed to polar residues.

Belongs to the heat shock protein 70 family.

Its function is as follows. Acts as a chaperone. The chain is Chaperone protein DnaK from Psychrobacter cryohalolentis (strain ATCC BAA-1226 / DSM 17306 / VKM B-2378 / K5).